The following is a 755-amino-acid chain: Tryptophan 2-monooxygenase (755 aa).

Residues serine 247, glutamate 267, lysine 275, and arginine 295 each coordinate FMN. Arginine 295 contacts substrate.

Belongs to the tryptophan 2-monooxygenase family. FMN serves as cofactor.

It catalyses the reaction L-tryptophan + O2 = indole-3-acetamide + CO2 + H2O. Its pathway is plant hormone metabolism; auxin biosynthesis. This Agrobacterium vitis (Rhizobium vitis) protein is Tryptophan 2-monooxygenase (iaaM).